The chain runs to 438 residues: UDP-N-acetylmuramoylalanine--D-glutamate ligase (438 aa).

Residue 112 to 118 participates in ATP binding; sequence GSNGKST.

It belongs to the MurCDEF family.

Its subcellular location is the cytoplasm. The catalysed reaction is UDP-N-acetyl-alpha-D-muramoyl-L-alanine + D-glutamate + ATP = UDP-N-acetyl-alpha-D-muramoyl-L-alanyl-D-glutamate + ADP + phosphate + H(+). The protein operates within cell wall biogenesis; peptidoglycan biosynthesis. In terms of biological role, cell wall formation. Catalyzes the addition of glutamate to the nucleotide precursor UDP-N-acetylmuramoyl-L-alanine (UMA). This Sodalis glossinidius (strain morsitans) protein is UDP-N-acetylmuramoylalanine--D-glutamate ligase.